The primary structure comprises 192 residues: Soluble inorganic pyrophosphatase 2 (192 aa).

Residues lysine 38, arginine 52, and tyrosine 64 each contribute to the substrate site. Mg(2+) is bound by residues aspartate 74, aspartate 79, and aspartate 111. Tyrosine 148 is a substrate binding site.

As to quaternary structure, monomer. Requires Mg(2+) as cofactor. In terms of processing, the N-terminus is blocked.

The protein localises to the mitochondrion. The enzyme catalyses diphosphate + H2O = 2 phosphate + H(+). This chain is Soluble inorganic pyrophosphatase 2 (ppa2), found in Chlamydomonas reinhardtii (Chlamydomonas smithii).